The following is a 363-amino-acid chain: S-adenosylmethionine:tRNA ribosyltransferase-isomerase (363 aa).

It belongs to the QueA family. In terms of assembly, monomer.

It localises to the cytoplasm. The enzyme catalyses 7-aminomethyl-7-carbaguanosine(34) in tRNA + S-adenosyl-L-methionine = epoxyqueuosine(34) in tRNA + adenine + L-methionine + 2 H(+). Its pathway is tRNA modification; tRNA-queuosine biosynthesis. Transfers and isomerizes the ribose moiety from AdoMet to the 7-aminomethyl group of 7-deazaguanine (preQ1-tRNA) to give epoxyqueuosine (oQ-tRNA). The polypeptide is S-adenosylmethionine:tRNA ribosyltransferase-isomerase (Magnetococcus marinus (strain ATCC BAA-1437 / JCM 17883 / MC-1)).